A 133-amino-acid chain; its full sequence is Small ribosomal subunit protein uS8 (133 aa).

The protein belongs to the universal ribosomal protein uS8 family. In terms of assembly, part of the 30S ribosomal subunit. Contacts proteins S5 and S12.

Functionally, one of the primary rRNA binding proteins, it binds directly to 16S rRNA central domain where it helps coordinate assembly of the platform of the 30S subunit. The sequence is that of Small ribosomal subunit protein uS8 from Micrococcus luteus (Micrococcus lysodeikticus).